The chain runs to 1043 residues: Phosphatidylinositol 4,5-bisphosphate 3-kinase catalytic subunit delta isoform (1043 aa).

Residues 16-105 (ESQSVVVDFL…LPVLRLVARE (90 aa)) enclose the PI3K-ABD domain. Positions 187-278 (NRALLVNVKF…GLTPHLTMVH (92 aa)) constitute a PI3K-RBD domain. The interval 287-312 (DEQSNPAPQVQKPRAKPPPIPAKKPS) is disordered. In terms of domain architecture, C2 PI3K-type spans 319–476 (LEQPFSIELI…SAAALVIYLP (158 aa)). Residues 496–673 (RHGERGRITE…GLIMEAYCRG (178 aa)) enclose the PIK helical domain. Phosphotyrosine is present on Tyr523. The region spanning 744-1026 (CVEQCTFMDS…KFNEALRESW (283 aa)) is the PI3K/PI4K catalytic domain. A G-loop region spans residues 750–756 (FMDSKMK). The segment at 889-897 (GIGDRHSDN) is catalytic loop. An activation loop region spans residues 908–934 (HIDFGHFLGNFKTKFGINRERVPFILT). Ser1038 bears the Phosphoserine; by autocatalysis mark.

The protein belongs to the PI3/PI4-kinase family. As to quaternary structure, heterodimer of a catalytic subunit PIK3CD and a p85 regulatory subunit (PIK3R1, PIK3R2 or PIK3R3). Interacts with ERAS and HRAS. Post-translationally, autophosphorylation on Ser-1038 results in the almost complete inactivation of the lipid kinase activity. In terms of tissue distribution, abundantly expressed in adult mouse spleen as well as in testis. Isoform 1 is expressed in spleen and lung (at protein level). Isoform 1 is expressed predominantly in leukocytes.

The protein localises to the cytoplasm. The enzyme catalyses a 1,2-diacyl-sn-glycero-3-phospho-(1D-myo-inositol-4,5-bisphosphate) + ATP = a 1,2-diacyl-sn-glycero-3-phospho-(1D-myo-inositol-3,4,5-trisphosphate) + ADP + H(+). It catalyses the reaction a 1,2-diacyl-sn-glycero-3-phospho-(1D-myo-inositol) + ATP = a 1,2-diacyl-sn-glycero-3-phospho-(1D-myo-inositol-3-phosphate) + ADP + H(+). It carries out the reaction 1-octadecanoyl-2-(5Z,8Z,11Z,14Z)-eicosatetraenoyl-sn-glycero-3-phospho-1D-myo-inositol 4,5-bisphosphate + ATP = 1-octadecanoyl-2-(5Z,8Z,11Z,14Z-eicosatetraenoyl)-sn-glycero-3-phospho-(1D-myo-inositol 3,4,5-triphosphate) + ADP + H(+). The protein operates within phospholipid metabolism; phosphatidylinositol phosphate biosynthesis. Its activity is regulated as follows. Activated by growth factors and cytokine receptors through a tyrosine-kinase-dependent mechanism. Activated by RAS. IC87114 inhibits lipid kinase activity and is selective in cells at doses up to 5-10 uM. Among other effects, IC87114 reduces allergic responses, prevents the recruitment of antigen-specific T cells into target tissue, and affects natural killer cell chemotaxis. Functionally, phosphoinositide-3-kinase (PI3K) phosphorylates phosphatidylinositol (PI) and its phosphorylated derivatives at position 3 of the inositol ring to produce 3-phosphoinositides. Uses ATP and PtdIns(4,5)P2 (phosphatidylinositol 4,5-bisphosphate) to generate phosphatidylinositol 3,4,5-trisphosphate (PIP3). PIP3 plays a key role by recruiting PH domain-containing proteins to the membrane, including AKT1 and PDPK1, activating signaling cascades involved in cell growth, survival, proliferation, motility and morphology. Mediates immune responses. Plays a role in B-cell development, proliferation, migration, and function. Required for B-cell receptor (BCR) signaling. Mediates B-cell proliferation response to anti-IgM, anti-CD40 and IL4 stimulation. Promotes cytokine production in response to TLR4 and TLR9. Required for antibody class switch mediated by TLR9. Involved in the antigen presentation function of B-cells. Involved in B-cell chemotaxis in response to CXCL13 and sphingosine 1-phosphate (S1P). Required for proliferation, signaling and cytokine production of naive, effector and memory T-cells. Required for T-cell receptor (TCR) signaling. Mediates TCR signaling events at the immune synapse. Activation by TCR leads to antigen-dependent memory T-cell migration and retention to antigenic tissues. Together with PIK3CG participates in T-cell development. Contributes to T-helper cell expansion and differentiation. Required for T-cell migration mediated by homing receptors SELL/CD62L, CCR7 and S1PR1 and antigen dependent recruitment of T-cells. Together with PIK3CG is involved in natural killer (NK) cell development and migration towards the sites of inflammation. Participates in NK cell receptor activation. Plays a role in NK cell maturation and cytokine production. Together with PIK3CG is involved in neutrophil chemotaxis and extravasation. Together with PIK3CG participates in neutrophil respiratory burst. Plays important roles in mast-cell development and mast cell mediated allergic response. Involved in stem cell factor (SCF)-mediated proliferation, adhesion and migration. Required for allergen-IgE-induced degranulation and cytokine release. The lipid kinase activity is required for its biological function. The chain is Phosphatidylinositol 4,5-bisphosphate 3-kinase catalytic subunit delta isoform (Pik3cd) from Mus musculus (Mouse).